The sequence spans 200 residues: dITP/XTP pyrophosphatase (200 aa).

8–13 (TRNAGK) lines the substrate pocket. Asp-72 (proton acceptor) is an active-site residue. Mg(2+) is bound at residue Asp-72. Residues Ser-73, 155 to 158 (FGYD), Lys-178, and 183 to 184 (HR) contribute to the substrate site.

It belongs to the HAM1 NTPase family. In terms of assembly, homodimer. Requires Mg(2+) as cofactor.

The catalysed reaction is XTP + H2O = XMP + diphosphate + H(+). It carries out the reaction dITP + H2O = dIMP + diphosphate + H(+). It catalyses the reaction ITP + H2O = IMP + diphosphate + H(+). Its function is as follows. Pyrophosphatase that catalyzes the hydrolysis of nucleoside triphosphates to their monophosphate derivatives, with a high preference for the non-canonical purine nucleotides XTP (xanthosine triphosphate), dITP (deoxyinosine triphosphate) and ITP. Seems to function as a house-cleaning enzyme that removes non-canonical purine nucleotides from the nucleotide pool, thus preventing their incorporation into DNA/RNA and avoiding chromosomal lesions. This is dITP/XTP pyrophosphatase from Streptomyces coelicolor (strain ATCC BAA-471 / A3(2) / M145).